A 423-amino-acid chain; its full sequence is Imidazolonepropionase (423 aa).

H78 and H80 together coordinate Fe(3+). 2 residues coordinate Zn(2+): H78 and H80. 4-imidazolone-5-propanoate contacts are provided by R87, Y150, and H183. N-formimidoyl-L-glutamate is bound at residue Y150. H247 serves as a coordination point for Fe(3+). Residue H247 coordinates Zn(2+). E250 provides a ligand contact to 4-imidazolone-5-propanoate. Residue D322 participates in Fe(3+) binding. D322 serves as a coordination point for Zn(2+). N-formimidoyl-L-glutamate contacts are provided by N324 and G326. S327 lines the 4-imidazolone-5-propanoate pocket.

The protein belongs to the metallo-dependent hydrolases superfamily. HutI family. Requires Zn(2+) as cofactor. Fe(3+) serves as cofactor.

The protein resides in the cytoplasm. The enzyme catalyses 4-imidazolone-5-propanoate + H2O = N-formimidoyl-L-glutamate. It participates in amino-acid degradation; L-histidine degradation into L-glutamate; N-formimidoyl-L-glutamate from L-histidine: step 3/3. In terms of biological role, catalyzes the hydrolytic cleavage of the carbon-nitrogen bond in imidazolone-5-propanoate to yield N-formimidoyl-L-glutamate. It is the third step in the universal histidine degradation pathway. The polypeptide is Imidazolonepropionase (Bacillus cereus (strain G9842)).